Reading from the N-terminus, the 142-residue chain is Large ribosomal subunit protein uL13 (142 aa).

The protein belongs to the universal ribosomal protein uL13 family. Part of the 50S ribosomal subunit.

This protein is one of the early assembly proteins of the 50S ribosomal subunit, although it is not seen to bind rRNA by itself. It is important during the early stages of 50S assembly. The polypeptide is Large ribosomal subunit protein uL13 (Ruthia magnifica subsp. Calyptogena magnifica).